A 118-amino-acid polypeptide reads, in one-letter code: Beta-defensin 126 (118 aa).

An N-terminal signal peptide occupies residues 1–20 (MKSLLFTLAVFMLLAQLVSG). An in vitro binds to LPS, mediates antimicrobial activity and inhibits LPS-mediated inflammation region spans residues 21-63 (SWYVKKCLNDVGICKKKCKPEELHVKNGWAMCGKQRDCCVPAD). 3 disulfides stabilise this stretch: Cys-27–Cys-58, Cys-34–Cys-52, and Cys-38–Cys-59.

This sequence belongs to the beta-defensin family. Homodimer or homooligomer; disulfide-linked. Post-translationally, O-glycosylated; glycans contain alpha(2,3)-linked sialic acids.

The protein localises to the secreted. Highly glycosylated atypical beta-defensin involved in several aspects of sperm function. Facilitates sperm transport in the female reproductive tract and contributes to sperm protection against immunodetection; both functions are probably implicating the negative surface charge provided by its O-linked oligosaccharides in the sperm glycocalyx. Involved in binding of sperm to oviductal epithelial cells to form a sperm reservoir until ovulation. Release from the sperm surface during capacitation and ovaluation by an elevation of oviductal fluid pH is unmasking other surface components and allows sperm to penetrate the cumulus matrix and bind to the zona pellucida of the oocyte. In vitro has antimicrobial activity and may inhibit LPS-mediated inflammation. In Pongo pygmaeus (Bornean orangutan), this protein is Beta-defensin 126 (DEFB126).